We begin with the raw amino-acid sequence, 309 residues long: NAD kinase (309 aa).

The Proton acceptor role is filled by aspartate 89. NAD(+)-binding positions include 89-90 (DG), 163-164 (NE), histidine 174, arginine 191, aspartate 193, and 204-209 (TAYALS).

It belongs to the NAD kinase family. It depends on a divalent metal cation as a cofactor.

Its subcellular location is the cytoplasm. It catalyses the reaction NAD(+) + ATP = ADP + NADP(+) + H(+). Involved in the regulation of the intracellular balance of NAD and NADP, and is a key enzyme in the biosynthesis of NADP. Catalyzes specifically the phosphorylation on 2'-hydroxyl of the adenosine moiety of NAD to yield NADP. This chain is NAD kinase, found in Shewanella sp. (strain MR-4).